Here is a 229-residue protein sequence, read N- to C-terminus: High molecular weight rubredoxin (229 aa).

The flavodoxin-reductase-like stretch occupies residues 1–158; the sequence is MDTKALHTLT…YYHQVKRGTT (158 aa). The region spanning 178–229 is the Rubredoxin-like domain; that stretch reads SPKYQCTICNYVYDPVQGDPEHGIAPGTPFADLPEDWTCPICGAGKDAFEQI. Fe cation-binding residues include Cys183, Cys186, Cys216, and Cys219.

In the N-terminal section; belongs to the flavodoxin reductase family. In terms of assembly, homodimer. Fe cation is required as a cofactor. FMN serves as cofactor.

Its function is as follows. Has nitric oxide reductase activity in combination with FprA; probably involved in nitrosative stress protection. Acts as an NADH:FprA oxidoreductase. In Moorella thermoacetica (strain ATCC 39073 / JCM 9320), this protein is High molecular weight rubredoxin (hrb).